A 314-amino-acid polypeptide reads, in one-letter code: Ketimine reductase mu-crystallin (314 aa).

Arg47 is a binding site for 3,3',5-triiodo-L-thyronine. Positions 82, 92, 119, 144, 146, 147, 168, 169, 170, 173, 205, 206, 226, and 228 each coordinate NADPH. Glu257 serves as a coordination point for 3,3',5-triiodo-L-thyronine. Ser292 lines the NADPH pocket.

The protein belongs to the ornithine cyclodeaminase/mu-crystallin family. Homodimer. Binds the thyroid hormone triiodothyronine (T3); T3 binding inhibits enzymatic activity. In terms of tissue distribution, expressed in neural tissues, muscle and kidney. Expressed in the inner ear.

It is found in the cytoplasm. It catalyses the reaction L-pipecolate + NADP(+) = Delta(1)-piperideine-2-carboxylate + NADPH + H(+). The catalysed reaction is L-pipecolate + NAD(+) = Delta(1)-piperideine-2-carboxylate + NADH + H(+). The enzyme catalyses L-proline + NADP(+) = 1-pyrroline-2-carboxylate + NADPH + H(+). It carries out the reaction L-proline + NAD(+) = 1-pyrroline-2-carboxylate + NADH + H(+). It catalyses the reaction (3R)-1,4-thiomorpholine-3-carboxylate + NAD(+) = 3,4-dehydrothiomorpholine-3-carboxylate + NADH + 2 H(+). The catalysed reaction is (3R)-1,4-thiomorpholine-3-carboxylate + NADP(+) = 3,4-dehydrothiomorpholine-3-carboxylate + NADPH + 2 H(+). The enzyme catalyses (S)-cystathionine ketimine + NADH + 2 H(+) = (3R,5S)-2,3,5,6,7-pentahydro-1,4-thiazepine-3,5-dicarboxylate + NAD(+). It carries out the reaction (S)-cystathionine ketimine + NADPH + 2 H(+) = (3R,5S)-2,3,5,6,7-pentahydro-1,4-thiazepine-3,5-dicarboxylate + NADP(+). It catalyses the reaction (R)-lanthionine ketimine + NADPH + 2 H(+) = (3R,5R)-1,4-thiomorpholine-3,5-dicarboxylate + NADP(+). The catalysed reaction is Delta(2)-thiazoline-2-carboxylate + NADPH + 2 H(+) = L-thiazolidine-2-carboxylate + NADP(+). With respect to regulation, inhibited by thyroid hormones triiodothyronine (T3) and thyroxine (T4). Functionally, catalyzes the NAD(P)H-dependent reduction of imine double bonds of a number of cyclic ketimine substrates, including sulfur-containing cyclic ketimines. Under physiological conditions, it efficiently catalyzes delta(1)-piperideine-2-carboxylate (P2C) and delta(1)-pyrroline-2-carboxylate (Pyr2C) reduction, suggesting a central role in lysine and glutamate metabolism. Additional substrates are delta(2)-thiazoline-2-carboxylate (T2C), 3,4-dehydrothiomorpholine-3-carboxylate (AECK), and (R)-lanthionine ketimine (LK) that is reduced at very low rate compared to other substrates. Also catalyzes the NAD(P)H-dependent reduction of (S)-cystathionine ketimine (CysK). The sequence is that of Ketimine reductase mu-crystallin from Homo sapiens (Human).